We begin with the raw amino-acid sequence, 412 residues long: Adenosine receptor A2a (412 aa).

The Extracellular segment spans residues 1-7; sequence MPIMGSS. Residues 8–32 form a helical membrane-spanning segment; the sequence is VYITVELAIAVLAILGNVLVCWAVW. The Cytoplasmic segment spans residues 33–42; sequence LNSNLQNVTN. The chain crosses the membrane as a helical span at residues 43–66; sequence YFVVSLAAADIAVGVLAIPFAITI. Residues 67 to 77 are Extracellular-facing; the sequence is STGFCAACHGC. 3 cysteine pairs are disulfide-bonded: cysteine 71–cysteine 159, cysteine 74–cysteine 146, and cysteine 77–cysteine 166. Residues 78-100 form a helical membrane-spanning segment; sequence LFIACFVLVLTQSSIFSLLAIAI. Topologically, residues 101–120 are cytoplasmic; the sequence is DRYIAIRIPLRYNGLVTGTR. The chain crosses the membrane as a helical span at residues 121–143; that stretch reads AKGIIAICWVLSFAIGLTPMLGW. The Extracellular segment spans residues 144–173; it reads NNCGQPKEGKNHSQGCGEGQVACLFEDVVP. N-linked (GlcNAc...) asparagine glycosylation is present at asparagine 154. Glutamate 169 contacts adenosine. The chain crosses the membrane as a helical span at residues 174–198; it reads MNYMVYFNFFACVLVPLLLMLGVYL. The Cytoplasmic segment spans residues 199-234; the sequence is RIFLAARRQLKQMESQPLPGERARSTLQKEVHAAKS. The chain crosses the membrane as a helical span at residues 235–258; sequence LAIIVGLFALCWLPLHIINCFTFF. Asparagine 253 provides a ligand contact to adenosine. A disulfide bridge links cysteine 259 with cysteine 262. At 259–266 the chain is on the extracellular side; sequence CPDCSHAP. Residues 267–290 form a helical membrane-spanning segment; the sequence is LWLMYLAIVLSHTNSVVNPFIYAY. Adenosine-binding residues include serine 277 and histidine 278. The Cytoplasmic segment spans residues 291-412; sequence RIREFRQTFR…PLAQDGAGVS (122 aa). Positions 391–412 are disordered; that stretch reads KGVCPEPPGLDDPLAQDGAGVS.

The protein belongs to the G-protein coupled receptor 1 family. In terms of assembly, interacts (via cytoplasmic C-terminal domain) with USP4; the interaction is direct. May interact with DRD4. Interacts with NECAB2. Interacts (via cytoplasmic C-terminal domain) with GAS2L2; interaction enhances receptor-mediated adenylyl cyclase activity. Post-translationally, ubiquitinated. Deubiquitinated by USP4; leading to stabilization and expression at the cell surface.

It is found in the cell membrane. Receptor for adenosine. The activity of this receptor is mediated by G proteins which activate adenylyl cyclase. The chain is Adenosine receptor A2a (ADORA2A) from Homo sapiens (Human).